A 147-amino-acid chain; its full sequence is MKLWVDADACPKVIRETIVRAAERTGVECTFVANHVVPVPKRANIHSLQVPAGFDIADNEIVRRVEPNDLVITSDIPLADEVITKGALALSSRGELYTKDTIKARLNIRDFMETMRSSGIQTGGPAALSQTERREFANHLDRILAKR.

Belongs to the UPF0178 family.

The protein is UPF0178 protein VP2328 of Vibrio parahaemolyticus serotype O3:K6 (strain RIMD 2210633).